Reading from the N-terminus, the 182-residue chain is MIFDEFSIKTLIRPVQDFPRPGVVFRDITPLFQSPKALRMVADSLIQRYVEADFTHIGALDARGFLVGSILAYELNKPLVLFRKQGKLPADVLSQAYSTEYGEAHLEIHADSLCEGDSVLLFDDLIATGGTLLAAAQLVRRMRANIHEAAAIIDLPELGGSQKLQDIGIPTFTLTAFALSDR.

This sequence belongs to the purine/pyrimidine phosphoribosyltransferase family. In terms of assembly, homodimer.

Its subcellular location is the cytoplasm. It carries out the reaction AMP + diphosphate = 5-phospho-alpha-D-ribose 1-diphosphate + adenine. It participates in purine metabolism; AMP biosynthesis via salvage pathway; AMP from adenine: step 1/1. Catalyzes a salvage reaction resulting in the formation of AMP, that is energically less costly than de novo synthesis. The chain is Adenine phosphoribosyltransferase from Stutzerimonas stutzeri (Pseudomonas stutzeri).